The sequence spans 115 residues: Movement protein TGB2 (115 aa).

The Cytoplasmic segment spans residues 1 to 13; the sequence is MSAQGHRLTAPVN. The chain crosses the membrane as a helical span at residues 14–34; the sequence is SEKVYIVLGLSFALVSITFLL. Over 35–74 the chain is Lumenal; it reads SRNSLPHVGDNIHSLPHGGAYRDGTKAILYNSPNLGSRVS. Residues 75-95 traverse the membrane as a helical segment; sequence LHNGKNAAFAAVLLLTLLIYG. Residues 96 to 115 are Cytoplasmic-facing; the sequence is SKYISQRNHTCACGNNHSSH.

It belongs to the Tymovirales TGBp2 protein family.

The protein resides in the host endoplasmic reticulum membrane. Its function is as follows. Plays a role in viral cell-to-cell propagation, by facilitating genome transport to neighboring plant cells through plasmosdesmata,. The polypeptide is Movement protein TGB2 (Potato virus X (PVX)).